The chain runs to 436 residues: Hydrogenobyrinate a,c-diamide synthase (436 aa).

The region spanning Arg244–Ala435 is the GATase cobBQ-type domain. The active-site Nucleophile is Cys327.

The protein belongs to the CobB/CbiA family. The cofactor is Mg(2+).

The catalysed reaction is hydrogenobyrinate + 2 L-glutamine + 2 ATP + 2 H2O = hydrogenobyrinate a,c-diamide + 2 L-glutamate + 2 ADP + 2 phosphate + 2 H(+). It participates in cofactor biosynthesis; adenosylcobalamin biosynthesis; cob(II)yrinate a,c-diamide from precorrin-2 (aerobic route): step 9/10. In terms of biological role, catalyzes the ATP-dependent amidation of the two carboxylate groups at positions a and c of hydrogenobyrinate, using either L-glutamine or ammonia as the nitrogen source. This is Hydrogenobyrinate a,c-diamide synthase from Brucella abortus biovar 1 (strain 9-941).